The following is a 288-amino-acid chain: MDLLIALLPALFWGSVVLINVLVGGGPYNQIRGTTFGALIIGIILLLTGNAKFDDLTIIIVGLISGAFWALGQGYQLKSVSLIGVSKTMPISTGLQLVGTTLFSAIFLGEWSTGVQVTLGLVAMVLLVIGIALTSIKGKNEASESSKNFGKAMPILLISTVGYVVYVVVAQIFGVDGMNALFFQSIGMAIGGLILSAKHETSVKSTLWNLIPGIVWGIGNLFMFYSQPKVGVATSFSFSQLLVIVSTLGGIFLLGEKKDKRQMIGIWAGIVLIVIAPLYSEILKHNYN.

Helical transmembrane passes span 4–26 (LIAL…VGGG), 33–51 (GTTF…TGNA), 56–75 (LTII…GQGY), 82–104 (LIGV…TLFS), 114–136 (GVQV…LTSI), 148–170 (NFGK…VVVA), 180–197 (ALFF…ILSA), 206–225 (TLWN…FMFY), 230–252 (VGVA…GGIF), and 264–283 (IGIW…SEIL).

This sequence belongs to the GRP transporter (TC 2.A.7.5) family.

The protein resides in the cell membrane. Functionally, involved in the uptake of glucose. The protein is Glucose uptake protein GlcU (glcU) of Staphylococcus xylosus.